We begin with the raw amino-acid sequence, 304 residues long: uncharacterized protein (304 aa).

Positions 1-15 (MTRPRPPLGPAMAGA) are cleaved as a signal peptide. The 124-residue stretch at 28-151 (NAAASTDADR…LSRWVDSLLS (124 aa)) folds into the Thioredoxin domain.

This is an uncharacterized protein from Mycobacterium bovis (strain ATCC BAA-935 / AF2122/97).